The sequence spans 213 residues: MKFLIIVLCLSLVNGYGIKRNVQEHDLKDPHEHPTMTWEILERFVGNTLYITTPQVLSLPLGAEVRCDDIEGFSCSWPGYKDYAHDHIDFHFNPSNPFYSFVDTFYVSLGDRVDKIYLRVISATSREKMLNVGCHTSFSVNLPIGIQIYHDKDMKLLVEGRHLECAHRVYFVKYCPYHAHGYCFDDKLKVYDLKRIKSRKAFEKVSQHQKSEL.

Residues M1–G15 form the signal peptide.

The protein is Non-structural protein 7b of Canine coronavirus (strain BGF10) (CCoV).